Reading from the N-terminus, the 465-residue chain is Clusterin-like protein 1 (465 aa).

The N-terminal stretch at 1–20 is a signal peptide; sequence MKPSLLVFTVYLLWLKDCHC. The stretch at 62-106 forms a coiled coil; that stretch reads MMERREEEHTNLMKTLKKCKEEKQEALKLMNEVQEHLEEEESLCQ. Disulfide bonds link Cys-105/Cys-333, Cys-116/Cys-325, Cys-119/Cys-322, and Cys-124/Cys-315. N-linked (GlcNAc...) asparagine glycosylation is found at Asn-196, Asn-257, Asn-285, Asn-311, Asn-351, Asn-412, and Asn-430.

This sequence belongs to the clusterin family. Retina-specific (at protein level). In the light-adapted retina, expressed in the outer segment of cone photoreceptors. In the dark-adapted retina, strongly expressed in the outer plexiform layer in the region of contact between the cone pedicles and second order neurons with little or no expression in the cone photoreceptor outer segments.

Its subcellular location is the secreted. This is Clusterin-like protein 1 (CLUL1) from Canis lupus familiaris (Dog).